An 895-amino-acid chain; its full sequence is Putative endoplasmic reticulum metallopeptidase 1-B (895 aa).

The tract at residues 1-27 is disordered; sequence MSTGIRRRHADEKKNILEKESLQNDET. At 1 to 39 the chain is on the cytoplasmic side; it reads MSTGIRRRHADEKKNILEKESLQNDETQREMEKDISLLR. The segment covering 9–27 has biased composition (basic and acidic residues); sequence HADEKKNILEKESLQNDET. A helical membrane pass occupies residues 40–60; sequence PAHWNFIGLFFLVLIIGTTFL. Topologically, residues 61–374 are lumenal; sequence HKCLPEPKDP…KPAEYADRKT (314 aa). N-linked (GlcNAc...) asparagine glycosylation is present at N156. Residues H180 and D192 each contribute to the Zn(2+) site. The active-site Proton acceptor is the E226. 3 residues coordinate Zn(2+): E227, E253, and H329. Residues 375 to 395 form a helical membrane-spanning segment; that stretch reads VFFDFLGLFVIIYPLSIAHLV. Topologically, residues 396–424 are cytoplasmic; that stretch reads NMLTICTVIALMSHRFYSKTFITFLALRD. A helical membrane pass occupies residues 425 to 445; sequence YVLTILTIALVLKAMTFMSLF. Over 446–457 the chain is Lumenal; it reads TYGALRWYTRHW. Residues 458–478 traverse the membrane as a helical segment; sequence LALVAYGLPSVWAGISVQGLL. Residues 479-489 are Cytoplasmic-facing; it reads TARLAPKAREE. Residues 490-512 traverse the membrane as a helical segment; the sequence is YGSTLELIHLTLISGILLAFTYY. Topologically, residues 513–515 are lumenal; the sequence is DIA. Residues 516–538 traverse the membrane as a helical segment; it reads SGFLFALLLVPAIKSIITYFGAW. Residues 539–553 are Cytoplasmic-facing; that stretch reads PTCPTFNTILTLILS. Residues 554–574 traverse the membrane as a helical segment; it reads FPGCAMAIYTTEMLLSIFIPI. At 575-584 the chain is on the lumenal side; the sequence is MGRSSYNPEP. The chain crosses the membrane as a helical span at residues 585–605; it reads AVSFFVAFSAGCIVLSLGGLV. Residues 606–619 are Cytoplasmic-facing; that stretch reads AKSRNSRSSNEAGL. Residues 620–640 traverse the membrane as a helical segment; it reads LELIYNILGVLLVTLTILYVF. The Lumenal portion of the chain corresponds to 641–895; the sequence is SSFWPSPYRF…WNVDQVYKYF (255 aa). N679 and N796 each carry an N-linked (GlcNAc...) asparagine glycan.

It belongs to the peptidase M28 family. Zn(2+) serves as cofactor.

The protein resides in the endoplasmic reticulum membrane. In Caenorhabditis elegans, this protein is Putative endoplasmic reticulum metallopeptidase 1-B.